The following is a 259-amino-acid chain: Deoxyribose-phosphate aldolase (259 aa).

D102 functions as the Proton donor/acceptor in the catalytic mechanism. K167 (schiff-base intermediate with acetaldehyde) is an active-site residue. K201 functions as the Proton donor/acceptor in the catalytic mechanism.

It belongs to the DeoC/FbaB aldolase family. DeoC type 2 subfamily.

The protein resides in the cytoplasm. It catalyses the reaction 2-deoxy-D-ribose 5-phosphate = D-glyceraldehyde 3-phosphate + acetaldehyde. The protein operates within carbohydrate degradation; 2-deoxy-D-ribose 1-phosphate degradation; D-glyceraldehyde 3-phosphate and acetaldehyde from 2-deoxy-alpha-D-ribose 1-phosphate: step 2/2. Its function is as follows. Catalyzes a reversible aldol reaction between acetaldehyde and D-glyceraldehyde 3-phosphate to generate 2-deoxy-D-ribose 5-phosphate. The protein is Deoxyribose-phosphate aldolase of Escherichia coli O45:K1 (strain S88 / ExPEC).